Consider the following 294-residue polypeptide: tRNA pseudouridine synthase B (294 aa).

The Nucleophile role is filled by Asp38.

This sequence belongs to the pseudouridine synthase TruB family. Type 1 subfamily.

The catalysed reaction is uridine(55) in tRNA = pseudouridine(55) in tRNA. Responsible for synthesis of pseudouridine from uracil-55 in the psi GC loop of transfer RNAs. This is tRNA pseudouridine synthase B from Clostridium perfringens (strain 13 / Type A).